We begin with the raw amino-acid sequence, 166 residues long: Regulatory protein RecX (166 aa).

It belongs to the RecX family.

It is found in the cytoplasm. Modulates RecA activity. In Escherichia fergusonii (strain ATCC 35469 / DSM 13698 / CCUG 18766 / IAM 14443 / JCM 21226 / LMG 7866 / NBRC 102419 / NCTC 12128 / CDC 0568-73), this protein is Regulatory protein RecX.